The chain runs to 257 residues: UPF0246 protein Shewmr4_2963 (257 aa).

The protein belongs to the UPF0246 family.

The polypeptide is UPF0246 protein Shewmr4_2963 (Shewanella sp. (strain MR-4)).